The following is a 137-amino-acid chain: Large ribosomal subunit protein mL61 (137 aa).

The protein belongs to the mitochondrion-specific ribosomal protein mL61 family. Component of the mitochondrial large ribosomal subunit (mt-LSU). Mature yeast 74S mitochondrial ribosomes consist of a small (37S) and a large (54S) subunit. The 37S small subunit contains a 15S ribosomal RNA (15S mt-rRNA) and 34 different proteins. The 54S large subunit contains a 21S rRNA (21S mt-rRNA) and 46 different proteins.

The protein resides in the mitochondrion. Its function is as follows. Component of the mitochondrial ribosome (mitoribosome), a dedicated translation machinery responsible for the synthesis of mitochondrial genome-encoded proteins, including at least some of the essential transmembrane subunits of the mitochondrial respiratory chain. The mitoribosomes are attached to the mitochondrial inner membrane and translation products are cotranslationally integrated into the membrane. mL61 is not essential in cells grown at 30 degrees Celsius but is required for mitochondrial translation in cells grown at 18 degrees Celsius. The protein is Large ribosomal subunit protein mL61 (MRP49) of Saccharomyces cerevisiae (strain ATCC 204508 / S288c) (Baker's yeast).